The sequence spans 923 residues: Mitochondrial 10-formyltetrahydrofolate dehydrogenase (923 aa).

Residues 1–19 constitute a mitochondrion; not cleaved transit peptide; it reads MLWRGSQALRHFSTSRVYF. The segment at 23–331 is hydrolase domain; sequence LKLALIGQSL…PASQYFSAGE (309 aa). At Ser31 the chain carries Phosphoserine. Lys60 is modified (N6-succinyllysine). 110–112 is a binding site for (6R)-10-formyltetrahydrofolate; it reads QFI. The active-site Proton donor is the His128. Residue Asp164 coordinates (6R)-10-formyltetrahydrofolate. Residues 339 to 416 enclose the Carrier domain; that stretch reads AEELKVAETI…DFIQKVVRRL (78 aa). Position 375 is an O-(pantetheine 4'-phosphoryl)serine (Ser375). The tract at residues 438–923 is aldehyde dehydrogenase domain; the sequence is TVKIPYQCFI…LKIKTVTLEY (486 aa). NADP(+) is bound by residues 592–594 and 618–621; these read IPW and KPAQ. Ser650 is modified (phosphoserine). NADP(+) is bound by residues 651–656 and 671–672; these read GGVAGQ and GS. Lys681 carries the post-translational modification N6-succinyllysine. Glu694 serves as the catalytic Proton acceptor. 694 to 695 provides a ligand contact to NADP(+); the sequence is EL. Cys728 (proton donor) is an active-site residue. Residues Lys778 and 825-827 each bind NADP(+); that span reads ESF. Position 903 is an N6-acetyllysine (Lys903).

The protein in the N-terminal section; belongs to the GART family. It in the C-terminal section; belongs to the aldehyde dehydrogenase family. ALDH1L subfamily. In terms of processing, phosphopantetheinylation at Ser-375 by AASDHPPT is required for the formyltetrahydrofolate dehydrogenase activity.

The protein localises to the mitochondrion. It carries out the reaction (6R)-10-formyltetrahydrofolate + NADP(+) + H2O = (6S)-5,6,7,8-tetrahydrofolate + CO2 + NADPH + H(+). Its function is as follows. Mitochondrial 10-formyltetrahydrofolate dehydrogenase that catalyzes the NADP(+)-dependent conversion of 10-formyltetrahydrofolate to tetrahydrofolate and carbon dioxide. This Mus musculus (Mouse) protein is Mitochondrial 10-formyltetrahydrofolate dehydrogenase.